Consider the following 140-residue polypeptide: UPF0102 protein ACIAD1132 (140 aa).

This sequence belongs to the UPF0102 family.

The sequence is that of UPF0102 protein ACIAD1132 from Acinetobacter baylyi (strain ATCC 33305 / BD413 / ADP1).